The sequence spans 327 residues: 2-methoxy-6-polyprenyl-1,4-benzoquinol methylase, mitochondrial (327 aa).

The N-terminal 43 residues, 1 to 43 (MAAPIRAFVLRVLSDSTRNIHHVLRCRSKYLCRRAAITARRGY), are a transit peptide targeting the mitochondrion. Residues Thr117, Asp171, and 199–200 (DA) contribute to the S-adenosyl-L-methionine site.

The protein belongs to the class I-like SAM-binding methyltransferase superfamily. MenG/UbiE family. Component of a multi-subunit COQ enzyme complex, composed of at least coq3, coq4, coq5, coq6, coq7 and coq9.

It is found in the mitochondrion inner membrane. It catalyses the reaction a 2-methoxy-6-(all-trans-polyprenyl)benzene-1,4-diol + S-adenosyl-L-methionine = a 5-methoxy-2-methyl-3-(all-trans-polyprenyl)benzene-1,4-diol + S-adenosyl-L-homocysteine + H(+). Its pathway is cofactor biosynthesis; ubiquinone biosynthesis. In terms of biological role, methyltransferase required for the conversion of 2-polyprenyl-6-methoxy-1,4-benzoquinol (DDMQH2) to 2-polyprenyl-3-methyl-6-methoxy-1,4-benzoquinol (DMQH2). The sequence is that of 2-methoxy-6-polyprenyl-1,4-benzoquinol methylase, mitochondrial from Danio rerio (Zebrafish).